A 941-amino-acid chain; its full sequence is Probable respiratory burst oxidase homolog protein I (941 aa).

At 1-374 (MSMSFSGGTH…LYSLQDNWKR (374 aa)) the chain is on the cytoplasmic side. Disordered regions lie at residues 29-48 (PSLP…SGEE) and 103-166 (ERLT…SGTE). Positions 36–45 (SPSPSSSSSS) are enriched in low complexity. Polar residues predominate over residues 103-117 (ERLTAGTNSKQQIQK). EF-hand-like stretches follow at residues 196–204 (SKDGYLFKS) and 232–243 (RRIMVDKINLQE). In terms of domain architecture, EF-hand spans 254 to 289 (ESFDSRLQIFFNMVKNGDGRITENEVKEIIILSASA). Residues N269, D271, R273, and E278 each contribute to the Ca(2+) site. S346 and S350 each carry phosphoserine. A helical transmembrane segment spans residues 375–395 (IWVLTLWFVIMAWLFMWKCYQ). The Extracellular portion of the chain corresponds to 396–407 (YKHKDAFHVMGY). A helical transmembrane segment spans residues 408–428 (CLVMAKGAAETLKFNMALILL). The region spanning 413 to 570 (KGAAETLKFN…LLLTVYVLLV (158 aa)) is the Ferric oxidoreductase domain. The Cytoplasmic portion of the chain corresponds to 429–514 (PVCRNTITYL…YFGLVNTPVG (86 aa)). A helical membrane pass occupies residues 515–535 (ITGIIMVAFMLIAFTLASRRC). Over 536–557 (RRNLTKLPKPFDKLTGYNAFWY) the chain is Extracellular. A helical membrane pass occupies residues 558 to 578 (SHHLLLTVYVLLVIHGVSLYL). At 579-586 (EHKWYRKT) the chain is on the cytoplasmic side. The helical transmembrane segment at 587–604 (VWMYLAVPVLLYVGERIF) threads the bilayer. Topologically, residues 605 to 731 (RFFRSRLYTV…PYGAPAQDHW (127 aa)) are extracellular. Positions 609–729 (SRLYTVEICK…DGPYGAPAQD (121 aa)) constitute an FAD-binding FR-type domain. A helical membrane pass occupies residues 732-752 (KYDVVLLVGLGIGATPFVSIL). The Cytoplasmic portion of the chain corresponds to 753–941 (RDLLNNIIKQ…TRFDFHKEQF (189 aa)).

It belongs to the RBOH (TC 5.B.1.3) family. In terms of assembly, monomer and homodimer.

The protein localises to the membrane. Its function is as follows. Calcium-dependent NADPH oxidase that generates superoxide. This Arabidopsis thaliana (Mouse-ear cress) protein is Probable respiratory burst oxidase homolog protein I (RBOHI).